Reading from the N-terminus, the 452-residue chain is Lichenan permease IIC component (452 aa).

Positions L8 to F421 constitute a PTS EIIC type-3 domain. The next 10 helical transmembrane spans lie at G31–L51, L72–A92, L104–F124, G138–V158, F187–V207, I218–L238, L246–W266, F291–M311, L351–G373, and S402–F422.

The protein localises to the cell membrane. Functionally, the phosphoenolpyruvate-dependent sugar phosphotransferase system (PTS), a major carbohydrate active -transport system, catalyzes the phosphorylation of incoming sugar substrates concomitant with their translocation across the cell membrane. This system is involved in lichenan transport. The polypeptide is Lichenan permease IIC component (licC) (Bacillus subtilis (strain 168)).